The following is a 362-amino-acid chain: Methylthioribose-1-phosphate isomerase (362 aa).

Catalysis depends on aspartate 252, which acts as the Proton donor.

The protein belongs to the eIF-2B alpha/beta/delta subunits family. MtnA subfamily.

The protein localises to the cytoplasm. Its subcellular location is the nucleus. The enzyme catalyses 5-(methylsulfanyl)-alpha-D-ribose 1-phosphate = 5-(methylsulfanyl)-D-ribulose 1-phosphate. Its pathway is amino-acid biosynthesis; L-methionine biosynthesis via salvage pathway; L-methionine from S-methyl-5-thio-alpha-D-ribose 1-phosphate: step 1/6. Its function is as follows. Catalyzes the interconversion of methylthioribose-1-phosphate (MTR-1-P) into methylthioribulose-1-phosphate (MTRu-1-P). This Drosophila virilis (Fruit fly) protein is Methylthioribose-1-phosphate isomerase.